Consider the following 47-residue polypeptide: Short transmembrane mitochondrial protein 1 (47 aa).

Residues 7 to 23 traverse the membrane as a helical segment; sequence GFTLGNVVGMYLAQNYD.

It belongs to the STMP1 family. In terms of assembly, interacts with components of the ubiquinol-cytochrome c oxidoreductase (cytochrome b-c1 complex, complex III, CIII), such as UQCRC1/QCR1, UQCRC2/QCR2 and UQCR10/QCR9. Interacts with components of the cytochrome c oxidase (mitochondrial respiratory chain complex IV) complex, such as MT-CO2. In terms of tissue distribution, expressed in monocytes and dendritic cells.

Its subcellular location is the mitochondrion inner membrane. It is found in the mitochondrion outer membrane. The protein resides in the mitochondrion intermembrane space. Functionally, microprotein involved in mitochondrial respiratory chain complex III (ubiquinol-cytochrome c oxidoreductase) and complex IV (mitochondrial cytochrome c oxidase complex) assembly. Required for the formation of mitochondrial supercomplexes (SCs). Also required for the activation of the NLRP3 inflammasome. This chain is Short transmembrane mitochondrial protein 1, found in Homo sapiens (Human).